A 196-amino-acid chain; its full sequence is Pycsar effector protein GmPycTM (196 aa).

Transmembrane regions (helical) follow at residues 34–54 (ISFS…SGII), 82–102 (ITTI…TYLF), and 176–196 (VNWL…FLFL).

It localises to the cell inner membrane. Pycsar (pyrimidine cyclase system for antiphage resistance) provides immunity against bacteriophage. The pyrimidine cyclase (PycC) synthesizes cyclic nucleotides in response to infection; these serve as specific second messenger signals. The signals activate the adjacent effector, leading to bacterial cell death and abortive phage infection. A clade C Pycsar system. Its function is as follows. The effector gene of a two-gene Pycsar system. Expression of this and adjacent uridylate cyclase GmPycC (AC P0DV42) probably confers resistance to bacteriophage. The genes are probably only expressed in response to bacteriophage infection. Probably only responds to cUMP (produced by its cognate NTP cyclase), acts by impairing membrane integrity. This chain is Pycsar effector protein GmPycTM, found in Gulbenkiania mobilis.